The sequence spans 1286 residues: 5-oxoprolinase (1286 aa).

Residues serine 930 and serine 1077 each carry the phosphoserine modification.

This sequence belongs to the oxoprolinase family. Homodimer.

It localises to the cytoplasm. The enzyme catalyses 5-oxo-L-proline + ATP + 2 H2O = L-glutamate + ADP + phosphate + H(+). Its function is as follows. Catalyzes the cleavage of 5-oxo-L-proline to form L-glutamate coupled to the hydrolysis of ATP to ADP and inorganic phosphate. The sequence is that of 5-oxoprolinase (OXP1) from Saccharomyces cerevisiae (strain ATCC 204508 / S288c) (Baker's yeast).